An 863-amino-acid chain; its full sequence is Bifunctional uridylyltransferase/uridylyl-removing enzyme (863 aa).

The interval 1–328 (MLFSPTLSSP…PSNQDTVIDQ (328 aa)) is uridylyltransferase. Positions 329–687 (LDDDFQLINQ…ISNRFSLGGT (359 aa)) are uridylyl-removing. The 123-residue stretch at 446–568 (VDEHTLRVML…VQNQVRLDYL (123 aa)) folds into the HD domain. 2 ACT domains span residues 688–772 (EVFI…PNRQ) and 794–863 (QMEL…RNIG).

The protein belongs to the GlnD family. The cofactor is Mg(2+).

It carries out the reaction [protein-PII]-L-tyrosine + UTP = [protein-PII]-uridylyl-L-tyrosine + diphosphate. The enzyme catalyses [protein-PII]-uridylyl-L-tyrosine + H2O = [protein-PII]-L-tyrosine + UMP + H(+). Its activity is regulated as follows. Uridylyltransferase (UTase) activity is inhibited by glutamine, while glutamine activates uridylyl-removing (UR) activity. In terms of biological role, modifies, by uridylylation and deuridylylation, the PII regulatory proteins (GlnB and homologs), in response to the nitrogen status of the cell that GlnD senses through the glutamine level. Under low glutamine levels, catalyzes the conversion of the PII proteins and UTP to PII-UMP and PPi, while under higher glutamine levels, GlnD hydrolyzes PII-UMP to PII and UMP (deuridylylation). Thus, controls uridylylation state and activity of the PII proteins, and plays an important role in the regulation of nitrogen assimilation and metabolism. The sequence is that of Bifunctional uridylyltransferase/uridylyl-removing enzyme from Haemophilus influenzae (strain 86-028NP).